Reading from the N-terminus, the 286-residue chain is Large ribosomal subunit protein uL2 (286 aa).

Disordered stretches follow at residues 22–59 (KELTPGYTPERSLLRPKTKTGGRNNQGKITSRHRGGGH) and 215–286 (LGRR…KLHK). Residues 230-240 (DHPHGGGEGRT) are compositionally biased toward basic and acidic residues. Residues 255–286 (KGGRTRQKRKPSNSSIVRRRKSRRYGQLKLHK) show a composition bias toward basic residues.

This sequence belongs to the universal ribosomal protein uL2 family. Part of the 50S ribosomal subunit. Forms a bridge to the 30S subunit in the 70S ribosome.

One of the primary rRNA binding proteins. Required for association of the 30S and 50S subunits to form the 70S ribosome, for tRNA binding and peptide bond formation. It has been suggested to have peptidyltransferase activity; this is somewhat controversial. Makes several contacts with the 16S rRNA in the 70S ribosome. The chain is Large ribosomal subunit protein uL2 from Rhodopirellula baltica (strain DSM 10527 / NCIMB 13988 / SH1).